The chain runs to 112 residues: Large ribosomal subunit protein P1w (112 aa).

The interval 85-112 (AAAPAAEEKKKDEPAEESDGDLGFGLFD) is disordered. Phosphoserine is present on Ser102.

Belongs to the eukaryotic ribosomal protein P1/P2 family. As to quaternary structure, P1 and P2 exist as dimers at the large ribosomal subunit.

Plays an important role in the elongation step of protein synthesis. This is Large ribosomal subunit protein P1w (RPP1A) from Arabidopsis thaliana (Mouse-ear cress).